Consider the following 268-residue polypeptide: Ribosomal RNA small subunit methyltransferase A (268 aa).

Residues Asn12, Leu14, Gly38, Glu59, Asp82, and Asn107 each coordinate S-adenosyl-L-methionine.

Belongs to the class I-like SAM-binding methyltransferase superfamily. rRNA adenine N(6)-methyltransferase family. RsmA subfamily.

Its subcellular location is the cytoplasm. The catalysed reaction is adenosine(1518)/adenosine(1519) in 16S rRNA + 4 S-adenosyl-L-methionine = N(6)-dimethyladenosine(1518)/N(6)-dimethyladenosine(1519) in 16S rRNA + 4 S-adenosyl-L-homocysteine + 4 H(+). Its function is as follows. Specifically dimethylates two adjacent adenosines (A1518 and A1519) in the loop of a conserved hairpin near the 3'-end of 16S rRNA in the 30S particle. May play a critical role in biogenesis of 30S subunits. The chain is Ribosomal RNA small subunit methyltransferase A from Aster yellows witches'-broom phytoplasma (strain AYWB).